The following is a 446-amino-acid chain: NADH oxidase (446 aa).

Residues 7 to 11, Asp32, Cys42, Val79, 109 to 112, Lys131, and Tyr158 contribute to the FAD site; these read GTNHA and ATGS. The Proton acceptor role is filled by His10. Cys42 serves as the catalytic Redox-active. Cys42 bears the Cysteine sulfinic acid (-SO2H) mark. Ile159, Asp178, Tyr187, and Gly244 together coordinate NAD(+). Asp282 contacts FAD. Residue Ala298 participates in NAD(+) binding. Residues Leu299, Ala300, and Ser301 each coordinate FAD. Residue Gly329 participates in NAD(+) binding. Phe427 serves as a coordination point for FAD.

It belongs to the class-III pyridine nucleotide-disulfide oxidoreductase family. In terms of assembly, homodimer. FAD is required as a cofactor.

It carries out the reaction 2 NADH + O2 + 2 H(+) = 2 NAD(+) + 2 H2O. With respect to regulation, inhibited by hydrogen peroxide, sulfhydryl reagents and quinine, but not by EDTA. In terms of biological role, catalyzes the four-electron reduction of molecular oxygen to water. Active on beta-NADH, but not on alpha-NADH, beta-NADPH or alpha-NADPH. Under aerobic conditions, oxygen acts as the electron acceptor. Under anaerobic conditions, DCIP and MB can replace oxygen as the electron acceptor. The polypeptide is NADH oxidase (Lactococcus lactis subsp. cremoris (strain MG1363)).